Reading from the N-terminus, the 429-residue chain is Adenylosuccinate synthetase (429 aa).

GTP-binding positions include 12-18 (GDEGKGK) and 40-42 (GHT). The active-site Proton acceptor is the Asp13. The Mg(2+) site is built by Asp13 and Gly40. IMP contacts are provided by residues 13 to 16 (DEGK), 38 to 41 (NAGH), Thr129, Arg143, Gln223, Thr238, and Arg302. The Proton donor role is filled by His41. A substrate-binding site is contributed by 298–304 (VVTGRKR). Residues Arg304, 330–332 (KLD), and 412–414 (STS) contribute to the GTP site.

The protein belongs to the adenylosuccinate synthetase family. Homodimer. The cofactor is Mg(2+).

It is found in the cytoplasm. It catalyses the reaction IMP + L-aspartate + GTP = N(6)-(1,2-dicarboxyethyl)-AMP + GDP + phosphate + 2 H(+). The protein operates within purine metabolism; AMP biosynthesis via de novo pathway; AMP from IMP: step 1/2. In terms of biological role, plays an important role in the de novo pathway of purine nucleotide biosynthesis. Catalyzes the first committed step in the biosynthesis of AMP from IMP. This is Adenylosuccinate synthetase from Maricaulis maris (strain MCS10) (Caulobacter maris).